Consider the following 708-residue polypeptide: Protein psiF (708 aa).

A signal peptide spans 1–19 (MKYLFIAIILILYCSFTKA). At 20 to 643 (DQKKFLVNMY…QSTAVKVGVG (624 aa)) the chain is on the extracellular side. 8 N-linked (GlcNAc...) asparagine glycosylation sites follow: Asn-78, Asn-116, Asn-222, Asn-317, Asn-318, Asn-371, Asn-498, and Asn-600. The 161-residue stretch at 103 to 263 (TQTAGSQNYY…YDYCGICNGK (161 aa)) folds into the PA14 domain. The chain crosses the membrane as a helical span at residues 644–664 (IGAAAAAGIAIGGAVAAGLAI). Over 665–708 (FGGKKAYDTWKTSRGNVMTGSQSNPLYTQNQNNGNNPLYSAPAE) the chain is Cytoplasmic. The segment covering 682-702 (MTGSQSNPLYTQNQNNGNNPL) has biased composition (polar residues). The interval 682–708 (MTGSQSNPLYTQNQNNGNNPLYSAPAE) is disordered.

The protein belongs to the prespore-cell-inducing factor family. As to quaternary structure, forms a complex with dicB.

The protein resides in the membrane. The protein localises to the secreted. Acts as a quorum sensing protein regulating discoidin gene expression during growth and development. D.discoideum is a single-celled amoebae and switches to multicellular development when food becomes limited. As the growing cells reach a high density, they begin expressing discoidin genes. The ability of psiF/dicA to induce discoidin gene expression when present in conditioned medium, suggests that it allows cells to sense their local density. The polypeptide is Protein psiF (psiF) (Dictyostelium discoideum (Social amoeba)).